The sequence spans 571 residues: Cilia- and flagella-associated protein 52 (571 aa).

10 WD repeats span residues 62–106, 109–150, 156–195, 288–327, 330–364, 366–405, 410–449, 451–490, 494–533, and 536–571; these read GHGN…LLAR, LHKG…AICG, LNVG…RKIW, QSQG…ETLI, CHFE…TSSN, AHRI…QKLE, EHKS…RNQM, LANT…VIRE, SLSG…VTHV, and GHSG…PYTS.

Belongs to the CFAP52 family. In terms of assembly, microtubule inner protein component of sperm flagellar doublet microtubules. Interacts with BRCA2. Interacts with the CCT chaperonin complex. Interacts with HSP70. Interacts with AK8. Interacts with CFAP45. Interacts with DNAI1. Interacts with IQDC.

The protein localises to the cytoplasm. It localises to the cytoskeleton. It is found in the cilium axoneme. Its subcellular location is the flagellum axoneme. Functionally, microtubule inner protein (MIP) part of the dynein-decorated doublet microtubules (DMTs) in cilia axoneme. Important for proper ciliary and flagellar beating. May act in cooperation with CFAP45 and axonemal dynein subunit DNAH11. May play a role in cell growth and/or survival. In Macaca fascicularis (Crab-eating macaque), this protein is Cilia- and flagella-associated protein 52.